Reading from the N-terminus, the 433-residue chain is 23S rRNA (uracil(1939)-C(5))-methyltransferase RlmD (433 aa).

Positions 10-68 (RTTTRQIITVSVNDLDSFGQGVARHNGKTLFIPGLLPQENAEVTVTEDKKQYARAKVVR) constitute a TRAM domain. Residues C81, C87, C90, and C162 each coordinate [4Fe-4S] cluster. The S-adenosyl-L-methionine site is built by Q265, F294, N299, E315, N342, and D363. C389 functions as the Nucleophile in the catalytic mechanism.

The protein belongs to the class I-like SAM-binding methyltransferase superfamily. RNA M5U methyltransferase family. RlmD subfamily.

The enzyme catalyses uridine(1939) in 23S rRNA + S-adenosyl-L-methionine = 5-methyluridine(1939) in 23S rRNA + S-adenosyl-L-homocysteine + H(+). Catalyzes the formation of 5-methyl-uridine at position 1939 (m5U1939) in 23S rRNA. The chain is 23S rRNA (uracil(1939)-C(5))-methyltransferase RlmD from Escherichia coli O157:H7.